Reading from the N-terminus, the 165-residue chain is Phosphopantetheine adenylyltransferase (165 aa).

A substrate-binding site is contributed by Thr-9. Residues 9-10 (TF) and His-17 each bind ATP. Lys-41, Leu-78, and Arg-92 together coordinate substrate. ATP-binding positions include 93 to 95 (GLR), Glu-103, and 128 to 134 (HQAIASK).

This sequence belongs to the bacterial CoaD family. In terms of assembly, homohexamer. The cofactor is Mg(2+).

Its subcellular location is the cytoplasm. The enzyme catalyses (R)-4'-phosphopantetheine + ATP + H(+) = 3'-dephospho-CoA + diphosphate. The protein operates within cofactor biosynthesis; coenzyme A biosynthesis; CoA from (R)-pantothenate: step 4/5. In terms of biological role, reversibly transfers an adenylyl group from ATP to 4'-phosphopantetheine, yielding dephospho-CoA (dPCoA) and pyrophosphate. The sequence is that of Phosphopantetheine adenylyltransferase from Ruegeria sp. (strain TM1040) (Silicibacter sp.).